The sequence spans 206 residues: Large ribosomal subunit protein mL40 (206 aa).

A mitochondrion-targeting transit peptide spans 1–46 (MATAAMLCAARALRPRSWIPGTCQAQVRHTHQRASLLSFWELIPMR). Residues 170–190 (PFEKEGPHYTPPVPNYQAPEG) form a disordered region.

This sequence belongs to the mitochondrion-specific ribosomal protein mL40 family. As to quaternary structure, component of the mitochondrial ribosome large subunit (39S) which comprises a 16S rRNA and about 50 distinct proteins.

The protein resides in the mitochondrion. The chain is Large ribosomal subunit protein mL40 (Mrpl40) from Rattus norvegicus (Rat).